We begin with the raw amino-acid sequence, 274 residues long: Diaminopimelate epimerase (274 aa).

Substrate-binding residues include Asn-11, Gln-44, and Asn-64. Cys-73 serves as the catalytic Proton donor. Substrate contacts are provided by residues 74-75 (GN), Asn-157, Asn-190, and 208-209 (ER). The Proton acceptor role is filled by Cys-217. Residue 218–219 (GS) coordinates substrate.

The protein belongs to the diaminopimelate epimerase family. As to quaternary structure, homodimer.

The protein resides in the cytoplasm. The catalysed reaction is (2S,6S)-2,6-diaminopimelate = meso-2,6-diaminopimelate. It functions in the pathway amino-acid biosynthesis; L-lysine biosynthesis via DAP pathway; DL-2,6-diaminopimelate from LL-2,6-diaminopimelate: step 1/1. Its function is as follows. Catalyzes the stereoinversion of LL-2,6-diaminopimelate (L,L-DAP) to meso-diaminopimelate (meso-DAP), a precursor of L-lysine and an essential component of the bacterial peptidoglycan. In Sodalis glossinidius (strain morsitans), this protein is Diaminopimelate epimerase.